A 263-amino-acid polypeptide reads, in one-letter code: 3-methyl-2-oxobutanoate hydroxymethyltransferase (263 aa).

Residues D43 and D82 each coordinate Mg(2+). 3-methyl-2-oxobutanoate is bound by residues D43–S44, D82, and K111. E113 contributes to the Mg(2+) binding site. The active-site Proton acceptor is the E179.

It belongs to the PanB family. Homodecamer; pentamer of dimers. Mg(2+) serves as cofactor.

Its subcellular location is the cytoplasm. The enzyme catalyses 3-methyl-2-oxobutanoate + (6R)-5,10-methylene-5,6,7,8-tetrahydrofolate + H2O = 2-dehydropantoate + (6S)-5,6,7,8-tetrahydrofolate. The protein operates within cofactor biosynthesis; (R)-pantothenate biosynthesis; (R)-pantoate from 3-methyl-2-oxobutanoate: step 1/2. In terms of biological role, catalyzes the reversible reaction in which hydroxymethyl group from 5,10-methylenetetrahydrofolate is transferred onto alpha-ketoisovalerate to form ketopantoate. The chain is 3-methyl-2-oxobutanoate hydroxymethyltransferase from Neisseria gonorrhoeae (strain ATCC 700825 / FA 1090).